The chain runs to 273 residues: Coiled-coil domain-containing protein 3 (273 aa).

A signal peptide spans 1-21 (MPLPLLLAALCLAASPAPARA). An N-linked (GlcNAc...) asparagine glycan is attached at asparagine 100. Positions 188–250 (SVQKALFEEE…VNQKLNEKLG (63 aa)) form a coiled coil.

In terms of assembly, homodimer. N-glycosylated. Expressed in aorta and adipose tissue. Enriched in mature adipocytes. Over-expressed in adipose tissue from either hormonally-induced or nutritionally-regulated obese mice models.

The protein resides in the secreted. In terms of biological role, negatively regulates TNF-alpha-induced pro-inflammatory response in endothelial cells (ECs) via inhibition of TNF-alpha-induced NF-kappaB activation in ECs. Positively regulates lipid accumulation in adipose cells. This chain is Coiled-coil domain-containing protein 3 (Ccdc3), found in Mus musculus (Mouse).